The chain runs to 264 residues: 3'-5' ssDNA/RNA exonuclease TatD (264 aa).

The a divalent metal cation site is built by Glu-92, His-128, and His-153.

The protein belongs to the metallo-dependent hydrolases superfamily. TatD-type hydrolase family. TatD subfamily. In terms of assembly, monomer. Mg(2+) serves as cofactor.

Its subcellular location is the cytoplasm. Its function is as follows. 3'-5' exonuclease that prefers single-stranded DNA and RNA. May play a role in the H(2)O(2)-induced DNA damage repair. The chain is 3'-5' ssDNA/RNA exonuclease TatD from Musicola paradisiaca (strain Ech703) (Dickeya paradisiaca).